Consider the following 876-residue polypeptide: Leucine--tRNA ligase (876 aa).

The 'HIGH' region motif lies at 42–52 (PYPSGKLHMGH). Positions 634-638 (KMSKS) match the 'KMSKS' region motif. Lysine 637 is a binding site for ATP.

This sequence belongs to the class-I aminoacyl-tRNA synthetase family.

It localises to the cytoplasm. The catalysed reaction is tRNA(Leu) + L-leucine + ATP = L-leucyl-tRNA(Leu) + AMP + diphosphate. In Neisseria meningitidis serogroup C / serotype 2a (strain ATCC 700532 / DSM 15464 / FAM18), this protein is Leucine--tRNA ligase.